Consider the following 109-residue polypeptide: Large ribosomal subunit protein P2 (109 aa).

Residues 63-109 (ASVPSGGAGGASGGAAAAGGAAEEAKEEEKEEEKEESDEDMGFGLFD) form a disordered region. Over residues 68 to 79 (GGAGGASGGAAA) the composition is skewed to gly residues. Positions 91–103 (EKEEEKEESDEDM) are enriched in acidic residues. Ser99 is modified (phosphoserine).

The protein belongs to the eukaryotic ribosomal protein P1/P2 family. P1 and P2 exist as dimers at the large ribosomal subunit.

Plays an important role in the elongation step of protein synthesis. The polypeptide is Large ribosomal subunit protein P2 (Fusarium culmorum).